Here is a 140-residue protein sequence, read N- to C-terminus: MSIMQVEVVSSEQNIYSGEASFVVVPTVQGELGIYPRHEPIMSLVRPGALRLTVPGEDKEVLVAVSGGVLEVQPDKVTVLADVAVRSAEMDQARAEEAKKAAEAGISQAKDDKALAEAHKALAAAIAQLKTLDYIRSHKK.

Belongs to the ATPase epsilon chain family. F-type ATPases have 2 components, CF(1) - the catalytic core - and CF(0) - the membrane proton channel. CF(1) has five subunits: alpha(3), beta(3), gamma(1), delta(1), epsilon(1). CF(0) has three main subunits: a, b and c.

The protein localises to the cell inner membrane. Functionally, produces ATP from ADP in the presence of a proton gradient across the membrane. This is ATP synthase epsilon chain from Neisseria meningitidis serogroup C / serotype 2a (strain ATCC 700532 / DSM 15464 / FAM18).